Consider the following 142-residue polypeptide: Hemoglobin subunit alpha (142 aa).

Residues 2–142 enclose the Globin domain; the sequence is VLSAADKTNV…VSTVLTSKYR (141 aa). Serine 4 bears the Phosphoserine mark. Residue lysine 8 is modified to N6-succinyllysine. A Phosphothreonine modification is found at threonine 9. At lysine 12 the chain carries N6-succinyllysine. At lysine 17 the chain carries N6-acetyllysine; alternate. At lysine 17 the chain carries N6-succinyllysine; alternate. Residue lysine 41 is modified to N6-succinyllysine. At serine 50 the chain carries Phosphoserine. Histidine 59 lines the O2 pocket. Histidine 88 contacts heme b. Serine 103 is modified (phosphoserine). Position 109 is a phosphothreonine (threonine 109). Residue serine 125 is modified to Phosphoserine. Phosphothreonine occurs at positions 135 and 138. Phosphoserine is present on serine 139.

The protein belongs to the globin family. As to quaternary structure, heterotetramer of two alpha chains and two beta chains. Red blood cells.

Functionally, involved in oxygen transport from the lung to the various peripheral tissues. In terms of biological role, hemopressin acts as an antagonist peptide of the cannabinoid receptor CNR1. Hemopressin-binding efficiently blocks cannabinoid receptor CNR1 and subsequent signaling. The chain is Hemoglobin subunit alpha (HBA) from Equus zebra (Mountain zebra).